Reading from the N-terminus, the 363-residue chain is Uroporphyrinogen decarboxylase (363 aa).

Residues 27–31, Asp77, Tyr157, Thr212, and His333 contribute to the substrate site; that span reads RQAGR.

The protein belongs to the uroporphyrinogen decarboxylase family. Homodimer.

It localises to the cytoplasm. The catalysed reaction is uroporphyrinogen III + 4 H(+) = coproporphyrinogen III + 4 CO2. It functions in the pathway porphyrin-containing compound metabolism; protoporphyrin-IX biosynthesis; coproporphyrinogen-III from 5-aminolevulinate: step 4/4. In terms of biological role, catalyzes the decarboxylation of four acetate groups of uroporphyrinogen-III to yield coproporphyrinogen-III. The polypeptide is Uroporphyrinogen decarboxylase (Cupriavidus pinatubonensis (strain JMP 134 / LMG 1197) (Cupriavidus necator (strain JMP 134))).